A 186-amino-acid chain; its full sequence is Biofilm operon icaADBC HTH-type negative transcriptional regulator IcaR (186 aa).

Residues 1–59 (MKDKIIDNAITLFSEKGYDGTTLDDIAKSVNIKKASLYYHFDSKKSIYEQSVKCCFDYL) enclose the HTH tetR-type domain. The segment at residues 22 to 41 (TLDDIAKSVNIKKASLYYHF) is a DNA-binding region (H-T-H motif).

In terms of assembly, homodimer.

In terms of biological role, represses transcription of the icaADBC operon necessary for biofilm production. The protein is Biofilm operon icaADBC HTH-type negative transcriptional regulator IcaR (icaR) of Staphylococcus aureus (strain NCTC 8325 / PS 47).